The primary structure comprises 56 residues: Small ribosomal subunit protein uS14 (56 aa).

Positions 21, 24, 39, and 42 each coordinate Zn(2+).

It belongs to the universal ribosomal protein uS14 family. As to quaternary structure, component of the 40S small ribosomal subunit. The cofactor is Zn(2+).

The protein localises to the cytoplasm. It localises to the cytosol. It is found in the rough endoplasmic reticulum. This is Small ribosomal subunit protein uS14 (RpS29) from Ixodes scapularis (Black-legged tick).